The following is a 6781-amino-acid chain: Replicase polyprotein 1ab (6781 aa).

The region spanning Ala2–Gly109 is the CoV Nsp1 globular domain. 4 residues coordinate ssDNA: Glu59, Asn95, Glu99, and Glu102. In terms of domain architecture, CoV Nsp2 N-terminal spans Ile112–Gly364. The CoV Nsp2 middle domain occupies Ser383–Thr776. The 118-residue stretch at Val778–Gly895 folds into the CoV Nsp2 C-terminal domain. Residues Gly896–Asp991 form the Ubiquitin-like 1 domain. The disordered stretch occupies residues Ile1009–Ala1040. The Peptidase C16 1 domain occupies Ser1057–Tyr1296. Catalysis depends on Cys1091, which acts as the For PL1-PRO activity. Residues Cys1162–Cys1193 form a C4-type 1; degenerate zinc finger. Catalysis depends on for PL1-PRO activity residues His1239 and Asp1252. The Macro domain occupies Lys1297–Thr1465. In terms of domain architecture, Ubiquitin-like 2 spans Asn1630–Pro1685. The Peptidase C16 2 domain maps to Ser1691 to Glu1951. The active-site For PL2-PRO activity is the Cys1729. The segment at Asp1808 to His1838 adopts a C4-type 2; degenerate zinc-finger fold. Catalysis depends on for PL2-PRO activity residues His1888 and Asp1901. Helical transmembrane passes span Phe1959–Phe1979 and Trp2022–Met2042. The tract at residues Phe1959–Ile2170 is HD1. Positions Ala2038–Asp2102 constitute a 3Ecto domain. 2 disulfides stabilise this stretch: Cys2054–Cys2080 and Cys2072–Cys2077. Transmembrane regions (helical) follow at residues Ile2105–Val2125, Ala2127–Gln2147, and Ile2150–Ile2170. The interval Met2176–Gly2266 is Y1. In terms of domain architecture, CoV Nsp3 Y spans Met2176–Gly2516. Positions 2180, 2185, 2190, 2193, 2226, 2229, 2233, and 2236 each coordinate Zn(2+). The tract at residues His2180 to Cys2193 is ZF1. The ZF2 stretch occupies residues Cys2226–Cys2236. Residues Pro2267 to Leu2356 are Y2. The coV-Y stretch occupies residues Pro2267–Gly2516. The Y3 stretch occupies residues Ser2357–Asp2414. The tract at residues Val2415–Gly2516 is Y4. A run of 7 helical transmembrane segments spans residues Phe2528–Phe2548, Ile2619–Gly2639, Gly2654–Tyr2674, Gly2754–Phe2774, Ile2787–Phe2807, Met2814–Val2834, and Leu2863–Phe2883. Positions Phe2528–Phe2883 are HD2. The Nsp4C domain occupies Leu2902–Gln2997. Residues Ala2998–Gln3299 form the Peptidase C30 domain. Catalysis depends on for 3CL-PRO activity residues His3038 and Cys3141. 7 helical membrane-spanning segments follow: residues Gly3336 to Leu3356, Leu3361 to Phe3381, Leu3399 to Leu3419, Pro3431 to Ala3451, Ile3454 to Val3474, Tyr3476 to Ile3496, and Met3500 to Phe3520. The HD3 stretch occupies residues Gly3336–Phe3520. The RdRp Nsp7 cofactor domain maps to Ser3580–Gln3662. The RdRp Nsp8 cofactor domain maps to Ser3663–Gln3857. One can recognise a Nsp9 ssRNA-binding domain in the interval Asn3858 to Gln3965. An ExoN/MTase coactivator domain is found at Ala3966–Asp4103. Zn(2+) is bound by residues Cys4039, Cys4042, His4048, Cys4055, Cys4081, Cys4084, Cys4092, and Cys4094. Zinc fingers lie at residues Cys4039–Cys4055 and Cys4081–Cys4094. Positions Tyr4106–Ile4355 constitute a NiRAN domain. In terms of domain architecture, Nsp12 Interface spans Lys4361–Ser4459. Positions 4390, 4396, 4401, 4405, and 4582 each coordinate Zn(2+). Residues Arg4460–Gln5027 form the Nsp12 RNA-dependent RNA polymerase domain. Residues Ser4462 to Asn4676 are rdRp Fingers N-ter. The segment at Thr4677–Pro4715 is rdRp Palm N-ter. Positions Pro4707–Gly4869 constitute a RdRp catalytic domain. Residues Lys4716 to Gly4774 are rdRp Fingers C-ter. Zn(2+)-binding residues include His4737, Cys4740, and Cys4741. The interval Thr4775 to Gln4910 is rdRp Palm C-ter. Active-site for RNA-directed RNA polymerase activity residues include Ser4854, Asp4855, and Asp4856. Residues His4911–Gln5027 form a rdRp Thumb region. Positions Ser5028–Asp5140 constitute a CV ZBD domain. 12 residues coordinate Zn(2+): Cys5032, Cys5035, Cys5043, Cys5046, Cys5053, Cys5056, His5060, His5066, Cys5077, Cys5082, Cys5099, and His5102. Positions Ser5275 to Leu5466 constitute a (+)RNA virus helicase ATP-binding domain. Residue Gly5310–Ser5317 coordinates ATP. The (+)RNA virus helicase C-terminal domain maps to His5467–Ser5636. The ExoN domain maps to Leu5696–Val5910. Catalysis depends on for exoribonuclease activity residues Asp5714, Glu5716, and Glu5815. Zn(2+)-binding residues include Cys5831, Cys5833, Cys5849, His5852, His5880, Cys5884, and His5887. Active-site for exoribonuclease activity residues include His5891 and Asp5896. Residue Cys5902 participates in Zn(2+) binding. One can recognise an N7-MTase domain in the interval Tyr5919–Leu6140. Asp5954–Gly5960 contacts S-adenosyl-L-methionine. Residues Cys6031–Thr6045 are gpppA-binding. Residues Cys6069, Cys6086, Cys6097, and His6100 each contribute to the Zn(2+) site. Residues Gly6142 to Arg6202 enclose the Nsp15 N-terminal oligomerization domain. Residues Lys6203–Glu6320 enclose the AV-Nsp11N/CoV-Nsp15M domain. The 141-residue stretch at Ser6337–Pro6477 folds into the NendoU domain. Residues His6367, His6382, and Lys6423 each act as for uridylate-specific endoribonuclease activity in the active site. A Nidovirus-type SAM-dependent 2'-O-MTase domain is found at Ala6481–Val6777. Active-site for 2'-O-methyltransferase residues include Lys6525, Asp6609, Lys6649, and Glu6682.

It belongs to the coronaviruses polyprotein 1ab family. Interacts with PL-PRO and nsp6. As to quaternary structure, monomer. Homodimer; disulfide-linked. In terms of assembly, interacts with nsp8 and nsp12 to form the replication-transcription complex (RTC): nsp12, nsp7, two subunits of nsp8, and up to two subunits of nsp13. Eight copies of nsp7 and eight copies of nsp8 assemble to form a heterohexadecamer dsRNA-encircling ring structure. Interacts with nsp7, nsp13 and nsp12 to form the replication-transcription complex (RTC): nsp12, nsp7, two subunits of nsp8, and up to two subunits of nsp13. Eight copies of nsp7 and eight copies of nsp8 assemble to form a heterohexadecamer dsRNA-encircling ring structure. As to quaternary structure, homodimer. In terms of assembly, forms a dodecamer and interacts with nsp14 and nsp16; these interactions enhance nsp14 and nsp16 enzymatic activities. Requires Mn(2+) as cofactor. In terms of processing, specific enzymatic cleavages in vivo by its own proteases yield mature proteins. 3CL-PRO and PL-PRO proteinases are autocatalytically processed.

It is found in the host cytoplasm. The protein localises to the host nucleus. Its subcellular location is the host membrane. It localises to the host perinuclear region. The protein resides in the host endoplasmic reticulum. It is found in the host endoplasmic reticulum-Golgi intermediate compartment. It carries out the reaction Thiol-dependent hydrolysis of ester, thioester, amide, peptide and isopeptide bonds formed by the C-terminal Gly of ubiquitin (a 76-residue protein attached to proteins as an intracellular targeting signal).. It catalyses the reaction a 5'-end diphospho-ribonucleoside in mRNA + GTP + H(+) = a 5'-end (5'-triphosphoguanosine)-ribonucleoside in mRNA + diphosphate. The enzyme catalyses RNA(n) + a ribonucleoside 5'-triphosphate = RNA(n+1) + diphosphate. The catalysed reaction is ATP + H2O = ADP + phosphate + H(+). It carries out the reaction a 5'-end (5'-triphosphoguanosine)-ribonucleoside in mRNA + S-adenosyl-L-methionine = a 5'-end (N(7)-methyl 5'-triphosphoguanosine)-ribonucleoside in mRNA + S-adenosyl-L-homocysteine. It catalyses the reaction uridylyl-uridylyl-ribonucleotide-RNA = a 3'-end uridylyl-2',3'-cyclophospho-uridine-RNA + a 5'-end dephospho-ribonucleoside-RNA. The enzyme catalyses a 5'-end (N(7)-methyl 5'-triphosphoguanosine)-ribonucleoside in mRNA + S-adenosyl-L-methionine = a 5'-end (N(7)-methyl 5'-triphosphoguanosine)-(2'-O-methyl-ribonucleoside) in mRNA + S-adenosyl-L-homocysteine + H(+). Inhibited by the substrate-analog Cbz-Val-Asn-Ser-Thr-Leu-Gln-CMK. Inhibited by (R)-16. Its function is as follows. Multifunctional protein responsible for the transcription of negative stranded RNA, leader RNA, subgenomic mRNAs and progeny virion RNA as well as proteinases responsible for the cleavage of the polyprotein into functional products. Plays a role in the inhibition of host interferon and pro-inflammatory cytokines production. Suppresses host RELA/p65 activation by blocking NFKBIA phosphorylation. Targets also the RLR pathway downstream of the IRF3 activation by targeting host CREBBP to proteasomal degradation. In terms of biological role, responsible for the cleavages located at the N-terminus of the replicase polyprotein. Participates together with nsp4 in the assembly of virally-induced cytoplasmic double-membrane vesicles necessary for viral replication. Forms a molecular pore spanning the double membrane of the coronavirus replication organelle. In addition, PLP2 possesses a deubiquitinating/deISGylating activity and processes both 'Lys-48'- and 'Lys-63'-linked polyubiquitin chains from cellular substrates. PLP2 also antagonizes innate immune induction of type I interferon by blocking the nuclear translocation of host IRF-3. Participates in the inhibition of the integrated stress response (ISR) in the infected host cell. Functionally, participates in the assembly of virally-induced cytoplasmic double-membrane vesicles necessary for viral replication. Its function is as follows. Responsible for the majority of cleavages as it cleaves the C-terminus of replicase polyprotein at 11 sites. Recognizes substrates containing the core sequence [ILMVF]-Q-|-[SGACN]. Also contains an ADP-ribose-1''-phosphate (ADRP)-binding function. Participates in the inhibition of the integrated stress response (ISR) in the infected host cell. Plays a role in the initial induction of autophagosomes from host endoplasmic reticulum. Later, limits the expansion of these phagosomes that are no longer able to deliver viral components to lysosomes. In terms of biological role, plays a role in viral RNA synthesis. Forms a hexadecamer with nsp8 (8 subunits of each) that may participate in viral replication by acting as a primase. Alternatively, may synthesize substantially longer products than oligonucleotide primers. Functionally, plays a role in viral RNA synthesis. Forms a hexadecamer with nsp7 (8 subunits of each) that may participate in viral replication by acting as a primase. Alternatively, may synthesize substantially longer products than oligonucleotide primers. Its function is as follows. Forms a primer, NSP9-pU, which is utilized by the polymerase for the initiation of RNA chains. Interacts with ribosome signal recognition particle RNA (SRP). Together with NSP8, suppress protein integration into the cell membrane, thereby disrupting host immune defenses. Plays a pivotal role in viral transcription by stimulating both nsp14 3'-5' exoribonuclease and nsp16 2'-O-methyltransferase activities. Therefore plays an essential role in viral mRNAs cap methylation. In terms of biological role, RNA-directed RNA polymerase that catalyzes the transcription of viral genomic and subgenomic RNAs. Acts in complex with nsp7 and nsp8 to transcribe both the minus and positive strands of genomic RNA. The kinase-like NiRAN domain of NSP12 attaches one or more nucleotides to the amino terminus of NSP9, forming a covalent RNA-protein intermediate that serves as transcription/replication primer. Subgenomic RNAs (sgRNAs) are formed by discontinuous transcription: The polymerase has the ability to pause at transcription-regulating sequences (TRS) and jump to the leader TRS, resulting in a major deletion. This creates a series of subgenomic RNAs that are replicated, transcribed and translated. In addition, Nsp12 is a subunit of the viral RNA capping enzyme that catalyzes the RNA guanylyltransferase reaction for genomic and sub-genomic RNAs. Subsequently, the NiRAN domain transfers RNA to GDP, and forms the core cap structure GpppA-RNA. Functionally, plays a role in viral RNA synthesis. Multi-functional protein with a zinc-binding domain in N-terminus displaying RNA and DNA duplex-unwinding activities with 5' to 3' polarity. ATPase activity is strongly stimulated by poly(U), poly(dT), poly(C), poly(dA), but not by poly(G). Its function is as follows. Plays a role in viral RNA synthesis through two distinct activities. The N7-guanine methyltransferase activity plays a role in the formation of the cap structure GpppA-RNA. The proofreading exoribonuclease reduces the sensitivity of the virus to RNA mutagens during replication. This activity acts on both ssRNA and dsRNA in a 3'-5' direction. Plays a role in viral transcription/replication and prevents the simultaneous activation of host cell dsRNA sensors, such as MDA5/IFIH1, OAS, and PKR. Acts by degrading the 5'-polyuridines generated during replication of the poly(A) region of viral genomic and subgenomic RNAs. Catalyzes a two-step reaction in which a 2'3'-cyclic phosphate (2'3'-cP) is first generated by 2'-O transesterification, which is then hydrolyzed to a 3'-phosphate (3'-P). If not degraded, poly(U) RNA would hybridize with poly(A) RNA tails and activate host dsRNA sensors. Decreases the RNA levels and thus the expression of host TBK1 and IRF3, antagonizing the host innate response. This chain is Replicase polyprotein 1ab (rep), found in Sus scrofa (Pig).